Consider the following 141-residue polypeptide: Large ribosomal subunit protein uL11 (141 aa).

Belongs to the universal ribosomal protein uL11 family. Part of the ribosomal stalk of the 50S ribosomal subunit. Interacts with L10 and the large rRNA to form the base of the stalk. L10 forms an elongated spine to which L12 dimers bind in a sequential fashion forming a multimeric L10(L12)X complex. In terms of processing, one or more lysine residues are methylated.

Functionally, forms part of the ribosomal stalk which helps the ribosome interact with GTP-bound translation factors. The protein is Large ribosomal subunit protein uL11 of Thermomicrobium roseum (strain ATCC 27502 / DSM 5159 / P-2).